The primary structure comprises 116 residues: Large ribosomal subunit protein uL24 (116 aa).

The interval M1–G27 is disordered.

This sequence belongs to the universal ribosomal protein uL24 family. In terms of assembly, part of the 50S ribosomal subunit.

Functionally, one of two assembly initiator proteins, it binds directly to the 5'-end of the 23S rRNA, where it nucleates assembly of the 50S subunit. One of the proteins that surrounds the polypeptide exit tunnel on the outside of the subunit. The chain is Large ribosomal subunit protein uL24 from Picosynechococcus sp. (strain ATCC 27264 / PCC 7002 / PR-6) (Agmenellum quadruplicatum).